Reading from the N-terminus, the 207-residue chain is V-type ATP synthase subunit D (207 aa).

It belongs to the V-ATPase D subunit family.

Its function is as follows. Produces ATP from ADP in the presence of a proton gradient across the membrane. This is V-type ATP synthase subunit D from Streptococcus gordonii (strain Challis / ATCC 35105 / BCRC 15272 / CH1 / DL1 / V288).